The primary structure comprises 298 residues: Dihydrodipicolinate reductase-like protein CRR1, chloroplastic (298 aa).

Residues 1–25 (MAAVNCHFFQLSRHLKPSRPSFSCS) constitute a chloroplast transit peptide. 160 to 163 (APTL) is an NAD(+) binding site.

It belongs to the DapB family. Expressed specifically in leaves.

The protein resides in the plastid. Its subcellular location is the chloroplast stroma. In terms of biological role, dihydrodipicolinate reductase (DHPR)-like protein that may not function as DHPR in lysine biosynthesis. Required for both formation and activity of the chloroplast NAD(P)H dehydrogenase (NDH) complex of the photosynthetic electron transport chain. May function in assembly or stabilization of the NDH complex. The chain is Dihydrodipicolinate reductase-like protein CRR1, chloroplastic from Arabidopsis thaliana (Mouse-ear cress).